The chain runs to 415 residues: Adenosylhomocysteinase (415 aa).

Residues threonine 53, aspartate 124, and glutamate 147 each coordinate substrate. Residue 148-150 (TTT) coordinates NAD(+). Residues lysine 177 and aspartate 181 each coordinate substrate. NAD(+) is bound by residues asparagine 182, 211–216 (GYGWVG), glutamate 234, asparagine 269, 290–292 (SGH), and asparagine 337.

This sequence belongs to the adenosylhomocysteinase family. It depends on NAD(+) as a cofactor.

It is found in the cytoplasm. The enzyme catalyses S-adenosyl-L-homocysteine + H2O = L-homocysteine + adenosine. It participates in amino-acid biosynthesis; L-homocysteine biosynthesis; L-homocysteine from S-adenosyl-L-homocysteine: step 1/1. Functionally, may play a key role in the regulation of the intracellular concentration of adenosylhomocysteine. The polypeptide is Adenosylhomocysteinase (Sulfurisphaera tokodaii (strain DSM 16993 / JCM 10545 / NBRC 100140 / 7) (Sulfolobus tokodaii)).